The primary structure comprises 141 residues: VLSGTDKSNIKAAWDKVGAHAGEYGAEALERTFTSFPTTKTYFPHFDLSHGSAQVKAHGKKVADALTNAVGHLDDLPGAMSALSDLHAHKLRVDPVNFKLLSHCLLVTLACHHPNDFTPAVHASLDKFLATVSTVLTSKYR.

The 141-residue stretch at 1–141 (VLSGTDKSNI…VSTVLTSKYR (141 aa)) folds into the Globin domain. Ser3 is modified (phosphoserine). Lys7 and Lys11 each carry N6-succinyllysine. Lys16 is subject to N6-acetyllysine; alternate. Lys16 carries the N6-succinyllysine; alternate modification. Phosphotyrosine is present on Tyr24. Phosphoserine is present on Ser35. Lys40 carries the N6-succinyllysine modification. Ser49 bears the Phosphoserine mark. His58 serves as a coordination point for O2. Residue His87 participates in heme b binding. Position 102 is a phosphoserine (Ser102). Thr108 is subject to Phosphothreonine. At Ser124 the chain carries Phosphoserine. Thr134 and Thr137 each carry phosphothreonine. Ser138 bears the Phosphoserine mark.

This sequence belongs to the globin family. Heterotetramer of two alpha chains and two beta chains. As to expression, red blood cells.

Involved in oxygen transport from the lung to the various peripheral tissues. Functionally, hemopressin acts as an antagonist peptide of the cannabinoid receptor CNR1. Hemopressin-binding efficiently blocks cannabinoid receptor CNR1 and subsequent signaling. The chain is Hemoglobin subunit alpha (HBA) from Talpa europaea (European mole).